A 409-amino-acid chain; its full sequence is Nitrogen permease regulator 2 homolog (409 aa).

The protein belongs to the NPR2 family.

The protein resides in the cytoplasm. It localises to the nucleus. Its function is as follows. Mediates inactivation of the TORC1 complex in response to amino acid starvation. Post-transcriptional regulator of nitrogen permeases. The polypeptide is Nitrogen permease regulator 2 homolog (Schizosaccharomyces pombe (strain 972 / ATCC 24843) (Fission yeast)).